Reading from the N-terminus, the 296-residue chain is LysM and putative peptidoglycan-binding domain-containing protein 4 (296 aa).

At 1 to 217 (MRHEELLTKT…PMDGADCGIQ (217 aa)) the chain is on the extracellular side. Residues 29–67 (KNGSGDSGDSSEEESHRVVLRPRGKERHKSGVHQPPQAG) form a disordered region. Residue Asn30 is glycosylated (N-linked (GlcNAc...) asparagine). Residues 46–59 (VVLRPRGKERHKSG) show a composition bias toward basic residues. Positions 74–118 (LQRELAQEDSLNKLALQYGCKVADIKKVNNFIREQDLYALKSVKI) constitute a LysM domain. A helical membrane pass occupies residues 218–238 (WWNAVFIMLLIGIVLPVFYLV). Topologically, residues 239 to 296 (YFKIQASGETPNSLNTTVIPNGSMAMGTVPGQAPRLAVAVPAVTSADSQFSQTTQAGS) are cytoplasmic.

It localises to the membrane. The sequence is that of LysM and putative peptidoglycan-binding domain-containing protein 4 (LYSMD4) from Homo sapiens (Human).